Reading from the N-terminus, the 143-residue chain is Large ribosomal subunit protein uL11 (143 aa).

The protein belongs to the universal ribosomal protein uL11 family. In terms of assembly, part of the ribosomal stalk of the 50S ribosomal subunit. Interacts with L10 and the large rRNA to form the base of the stalk. L10 forms an elongated spine to which L12 dimers bind in a sequential fashion forming a multimeric L10(L12)X complex. Post-translationally, one or more lysine residues are methylated.

In terms of biological role, forms part of the ribosomal stalk which helps the ribosome interact with GTP-bound translation factors. This is Large ribosomal subunit protein uL11 from Kocuria rhizophila (strain ATCC 9341 / DSM 348 / NBRC 103217 / DC2201).